The chain runs to 619 residues: DNA mismatch repair protein MutL (619 aa).

A disordered region spans residues 339–400 (AEKDDPPAPR…GGASWPHAQP (62 aa)).

It belongs to the DNA mismatch repair MutL/HexB family.

This protein is involved in the repair of mismatches in DNA. It is required for dam-dependent methyl-directed DNA mismatch repair. May act as a 'molecular matchmaker', a protein that promotes the formation of a stable complex between two or more DNA-binding proteins in an ATP-dependent manner without itself being part of a final effector complex. This chain is DNA mismatch repair protein MutL, found in Klebsiella pneumoniae subsp. pneumoniae (strain ATCC 700721 / MGH 78578).